We begin with the raw amino-acid sequence, 875 residues long: Phosphoenolpyruvate carboxylase (875 aa).

Residues H137 and K542 contribute to the active site.

It belongs to the PEPCase type 1 family. Mg(2+) serves as cofactor.

It catalyses the reaction oxaloacetate + phosphate = phosphoenolpyruvate + hydrogencarbonate. Forms oxaloacetate, a four-carbon dicarboxylic acid source for the tricarboxylic acid cycle. This is Phosphoenolpyruvate carboxylase from Pseudomonas putida (strain GB-1).